Reading from the N-terminus, the 255-residue chain is Triosephosphate isomerase (255 aa).

15 to 17 provides a ligand contact to substrate; that stretch reads NWK. H100 functions as the Electrophile in the catalytic mechanism. The active-site Proton acceptor is the E172. Residues G178, S218, and 239 to 240 each bind substrate; that span reads GG.

Belongs to the triosephosphate isomerase family. Homodimer.

Its subcellular location is the cytoplasm. The catalysed reaction is D-glyceraldehyde 3-phosphate = dihydroxyacetone phosphate. The protein operates within carbohydrate biosynthesis; gluconeogenesis. Its pathway is carbohydrate degradation; glycolysis; D-glyceraldehyde 3-phosphate from glycerone phosphate: step 1/1. Its function is as follows. Involved in the gluconeogenesis. Catalyzes stereospecifically the conversion of dihydroxyacetone phosphate (DHAP) to D-glyceraldehyde-3-phosphate (G3P). The protein is Triosephosphate isomerase of Clostridium tetani (strain Massachusetts / E88).